Here is a 358-residue protein sequence, read N- to C-terminus: tRNA N6-adenosine threonylcarbamoyltransferase (358 aa).

Residues His-122 and His-126 each coordinate Fe cation. Substrate-binding positions include 145–149 (LVSGG), Asp-178, Gly-191, and Asn-287. Asp-315 is a binding site for Fe cation.

Belongs to the KAE1 / TsaD family. The cofactor is Fe(2+).

Its subcellular location is the cytoplasm. The enzyme catalyses L-threonylcarbamoyladenylate + adenosine(37) in tRNA = N(6)-L-threonylcarbamoyladenosine(37) in tRNA + AMP + H(+). In terms of biological role, required for the formation of a threonylcarbamoyl group on adenosine at position 37 (t(6)A37) in tRNAs that read codons beginning with adenine. Is involved in the transfer of the threonylcarbamoyl moiety of threonylcarbamoyl-AMP (TC-AMP) to the N6 group of A37, together with TsaE and TsaB. TsaD likely plays a direct catalytic role in this reaction. The polypeptide is tRNA N6-adenosine threonylcarbamoyltransferase (Hydrogenovibrio crunogenus (strain DSM 25203 / XCL-2) (Thiomicrospira crunogena)).